The sequence spans 157 residues: uncharacterized protein (157 aa).

A signal peptide spans 1–19; it reads MRKYLIILVLLLFLSSSFG.

This is an uncharacterized protein from Methanocaldococcus jannaschii (strain ATCC 43067 / DSM 2661 / JAL-1 / JCM 10045 / NBRC 100440) (Methanococcus jannaschii).